The chain runs to 1461 residues: MEESFLGDELTRLRSNSRMSSWRSSQSIREVFGGSSDVFMKNYSTRWREMAEEEEKELKWAAIDRLPTYNRLRKGMMKEVMSNGRVVHHEVDMTKLGNQDKKVLMESILKVVEDDNEQFLRRLRNRTDRVGIEIPKIEVRFQNLSVGGDAYVGTRALPTLLNSTLNTIEAVLGLIHLSPSKKRVVKILEDVSGIIRPSRMTLLLGPPGSGKTTFLKALAGKSEKDLRVNGKITYCGHEFHEFVPQRTSAYISQHDLHHGEMTVRETLDFAGRCLGVGTRYDLLVELSRREKEAGIMPDPQIDAFMKATAIDGQETSLITDYVLKILGLDICADIMVGDDMRRGISGGQKKRVTTGEMLVGPAKAFFMDEISKGLDSSTTYQIVKFMRQMVHINDITMVISLLQPAPETFDLFDDVIVLSEGQIVYQGPRENVLEFFEYMGFRCPERKAIADFLLEVTSKKDQEQYWFRKSRPYVYISVPEFSESFNSFQIGEQIIEELTIPYDKYSVHRAALVKNKYGISSWELFKSCFTREWLLMKRSSFLYIFKTTQITIMATIALTVFLRTQMKAGTVKDSAKFWGALFFSLINVMFNGMQELAMTVFRLPVFFKQRNSLFYPAWAFALPIWVLKIPISLVESAIWIILTYYTIGFAPAASRFFKQLLAFIGVHQMALSLFRFIAAAGRTQVVANTLGTFTLLMVFILGGFIVSKDDIQDWMIWGYYLSPMMYGQNAIAINEFLDDRWSAPTNGSQPTVGKTLLHARGLFTTESWYWISIGALFGFSLLFNVLFIAALTFLNPIGDTKAVKVENGDKNNRRPQETAIVGDIQMAPTRSQANTSSVIPFPNNESRKGMILPFQPLSLAFNHVNYYVDMPAEMKTQGVEEERLQLLRDASGAFRPGILTALVGVSGAGKTTLMDVLAGRKTGGYIEGSINISGYPKNQTTFARVSGYCEQNDIHSPYVTVYESLLYSAWLRLASDVKTETRKMFVEEVMELVELKLLRNALVGLPGVDGLSTEQRKRLTTAVELVANPSIIFMDEPTSGLDARAAAIVMRTVRKTVDTGRTVVCTIHQPSIDIFEAFDELLLMKIGGQVIYAGPLGHRSHKLVEYFETIPGVPKIRESDNPATWMLDVSSSSMEAQLVVDFAEVYANSNLYQRNQLLIKELSTPATCSKDLYFPTQYSQSFITQCKACFWKQHWSYWRNSQYNAIRFFMTVIIGILFGVIFWNKGNQIHRQQDLLNLLGATYAAVMFLGATNASAVQSVVAIERTVFYRERAAGMYSELPYAFAQVAIETIYVAIQTFVYSLLLFSMIGYQWTAVKFFYFYYFIFMCFTYFSMYGMMVVALTPGYQIAAIVMSFFLSFWNLFSGFLIPRPLIPVWWRWYYWASPVAWTIYGIFASQVGDRTDELELTGETEKIQVNEFLKEYLGYDHDFLLVVVFAHVGWVLLFFFVFAYGIKFLNYQKR.

One can recognise an ABC transporter 1 domain in the interval 172–445 (LGLIHLSPSK…FEYMGFRCPE (274 aa)). 205–212 (GPPGSGKT) is a binding site for ATP. An ABC transmembrane type-2 1 domain is found at 523–736 (ELFKSCFTRE…GQNAIAINEF (214 aa)). Helical transmembrane passes span 541–561 (FLYI…LTVF), 577–597 (FWGA…QELA), 622–642 (LPIW…WIIL), 660–680 (LLAF…IAAA), 685–705 (VVAN…GGFI), and 771–791 (ISIG…IAAL). Positions 859-1111 (LAFNHVNYYV…KLVEYFETIP (253 aa)) constitute an ABC transporter 2 domain. Residue 904–911 (GVSGAGKT) participates in ATP binding. In terms of domain architecture, ABC transmembrane type-2 2 spans 1184–1398 (TQCKACFWKQ…TIYGIFASQV (215 aa)). The next 7 membrane-spanning stretches (helical) occupy residues 1203-1223 (YNAI…VIFW), 1243-1263 (YAAV…VVAI), 1291-1311 (TIYV…MIGY), 1321-1341 (FYYF…MVVA), 1348-1368 (IAAI…GFLI), 1379-1399 (WYYW…SQVG), and 1430-1450 (FLLV…FVFA).

Belongs to the ABC transporter superfamily. ABCG family. PDR (TC 3.A.1.205) subfamily.

Its subcellular location is the membrane. Functionally, may be a general defense protein. The polypeptide is Pleiotropic drug resistance protein 2 (PDR2) (Nicotiana plumbaginifolia (Leadwort-leaved tobacco)).